Here is a 277-residue protein sequence, read N- to C-terminus: Putative hydro-lyase BPP3031 (277 aa).

This sequence belongs to the D-glutamate cyclase family.

The sequence is that of Putative hydro-lyase BPP3031 from Bordetella parapertussis (strain 12822 / ATCC BAA-587 / NCTC 13253).